Consider the following 260-residue polypeptide: Dehydrogenase/reductase SDR family member 11 (260 aa).

The first 30 residues, 1–30, serve as a signal peptide directing secretion; the sequence is MARPGMERWRDRLALVTGASGGIGAAVARA. Residues 18–23, 43–44, Glu-49, 70–71, and Asn-97 each bind NADP(+); these read GASGGI, RT, and DL. Substrate-binding residues include Ser-151 and Tyr-166. NADP(+)-binding positions include Tyr-166, Lys-170, 201 to 204, and Lys-208; that span reads VETQ. Tyr-166 (proton acceptor) is an active-site residue.

This sequence belongs to the short-chain dehydrogenases/reductases (SDR) family. As to quaternary structure, homotetramer. In terms of tissue distribution, isoform 1: Ubiquitously expressed, with highest levels in testis, small intestine, colon, kidney, brain and heart. Isoform 3: Expressed in brain, heart and skeletal muscle.

It is found in the secreted. It carries out the reaction a 3beta-hydroxysteroid + NADP(+) = a 3-oxosteroid + NADPH + H(+). The enzyme catalyses 17beta-estradiol + NAD(+) = estrone + NADH + H(+). It catalyses the reaction 17beta-estradiol + NADP(+) = estrone + NADPH + H(+). The protein operates within steroid biosynthesis; estrogen biosynthesis. With respect to regulation, inhibited by flavonoids including apigenin, luteolin, genistein, kaempferol and quercetin and also by carbenoxolone, zearalenone, glycyrrhetinic, curcumin and flufenamic acid. In terms of biological role, catalyzes the conversion of the 17-keto group of estrone, 4- and 5-androstenes and 5-alpha-androstanes into their 17-beta-hydroxyl metabolites and the conversion of the 3-keto group of 3-, 3,17- and 3,20- diketosteroids into their 3-hydroxyl metabolites. Exhibits reductive 3-beta-hydroxysteroid dehydrogenase activity toward 5-beta-androstanes, 5-beta-pregnanes, 4-pregnenes and bile acids. May also reduce endogenous and exogenous alpha-dicarbonyl compounds and xenobiotic alicyclic ketones. This chain is Dehydrogenase/reductase SDR family member 11 (DHRS11), found in Homo sapiens (Human).